The primary structure comprises 1034 residues: Condensin complex subunit 3 (1034 aa).

HEAT repeat units lie at residues 95 to 132, 139 to 176, 178 to 213, 242 to 279, 281 to 317, 439 to 476, and 618 to 655; these read SPVNCLFNFLLQSHGASSMAVRFRVCQLINKLLVNLPE, DLFDKIHDAMLIRLKDRVPNVRIQAVLALARLQDPSDP, CPVSNAYVHLLENDSNPEVRRAVLTCIAPSAKSLPK, LTIAQRVKLLQQGLNDRSAAVKDVIQKKLIQAWLQYSE, DVLDLLHRLDVENSPEVSLSALNALFSVSPVGELVQN, TSLISSLAELLLFVLKDDDKRIQTVAEIISELREPIVT, and DFARQHLPLLLQILQLDEVKVKNSALNAVFDMLLLFGM. Polar residues predominate over residues 663–672; the sequence is TNPDDSQCKA. A disordered region spans residues 663 to 693; that stretch reads TNPDDSQCKAQENADEDISEQEKPGSVDENL. HEAT repeat units lie at residues 703–740, 785–823, and 878–915; these read ATVNGILHLFSGFLDSEIAEIRTETAEGLVKLMFSGRL, CFAEAFLPTLQTLFNAPASSPLADVDVANVAELLVDLTR, and ENSTDLLPLLDCAVEDVTDKVCERAIEKVRSQLRSGRE. A compositionally biased stretch (basic and acidic residues) spans 909–949; it reads QLRSGREEHRVSKETEPQVSKETEDRTNLQENEEGKQKDEA. The interval 909 to 1034 is disordered; it reads QLRSGREEHR…LSKLLNEEAN (126 aa). Positions 964–984 are enriched in basic residues; that stretch reads RGKATKGRRKGPAAAATRRKA. A compositionally biased stretch (basic and acidic residues) spans 985–999; that stretch reads SKAEEAEAEMERQEE.

Belongs to the CND3 (condensin subunit 3) family. As to quaternary structure, component of the condensin complex, which contains the XCAP-E/SMC2 and XCAP-C/SMC4 heterodimer, and three non SMC subunits that probably regulate the complex: XCAP-H/NCAPH, XCAP-D2/NCAPD2 and XCAP-G/NCAPG. Post-translationally, phosphorylated by cdk1. Its phosphorylation, as well as that of XCAP-D2 and XCAP-H subunits, activates the condensin complex and is required for chromosome condensation.

The protein resides in the nucleus. The protein localises to the cytoplasm. Its subcellular location is the chromosome. In terms of biological role, regulatory subunit of the condensin complex, a complex required for conversion of interphase chromatin into mitotic-like condense chromosomes. The condensin complex probably introduces positive supercoils into relaxed DNA in the presence of type I topoisomerases and converts nicked DNA into positive knotted forms in the presence of type II topoisomerase. The polypeptide is Condensin complex subunit 3 (ncapg) (Xenopus laevis (African clawed frog)).